The primary structure comprises 278 residues: Ankyrin repeat and SOCS box protein 13 (278 aa).

6 ANK repeats span residues 18 to 47 (VERT…CVNQ), 51 to 80 (DSIT…QVDA), 84 to 113 (DGST…KVNP), 116 to 145 (YTAS…NLEA), 149 to 178 (HFGT…NVNA), and 181 to 210 (LHET…NIYA). Positions 229 to 278 (AKCFEYYEKTPLSLSQLCRVSLRKATGVRGLEKVAKLNIPPRLIDYLSYN) constitute an SOCS box domain.

Belongs to the ankyrin SOCS box (ASB) family.

Its pathway is protein modification; protein ubiquitination. Functionally, may be a substrate-recognition component of a SCF-like ECS (Elongin-Cullin-SOCS-box protein) E3 ubiquitin-protein ligase complex which mediates the ubiquitination and subsequent proteasomal degradation of target proteins. In Mus musculus (Mouse), this protein is Ankyrin repeat and SOCS box protein 13 (Asb13).